The sequence spans 826 residues: Putative pentatricopeptide repeat-containing protein At1g13630 (826 aa).

PPR repeat units follow at residues 228–262, 263–297, 298–332, 333–367, 368–402, 404–438, 439–473, 474–508, 509–543, 544–578, 579–613, 614–648, 661–695, 696–730, 731–765, and 766–800; these read NEHT…DIGP, SVVS…GLVP, SVYS…GVEP, DSVT…GLSP, DVIT…GFEL, SIIP…GLSP, DLVA…RILP, NSRT…GETL, DIVL…GITP, SVAT…GLAP, SVVS…GIPP, TNVT…KCKQ, DQIT…NLDA, SSAT…NVSL, SKFA…GFNV, and SIRD…GISP.

The protein belongs to the PPR family. P subfamily.

In Arabidopsis thaliana (Mouse-ear cress), this protein is Putative pentatricopeptide repeat-containing protein At1g13630.